The sequence spans 792 residues: Probable exo-1,4-beta-xylosidase xlnD (792 aa).

An N-terminal signal peptide occupies residues 1 to 20; that stretch reads MSVAKSIAAVLVALLPGALA. 5 N-linked (GlcNAc...) asparagine glycosylation sites follow: asparagine 23, asparagine 87, asparagine 118, asparagine 142, and asparagine 246. Aspartate 310 is an active-site residue. Residues asparagine 326, asparagine 385, asparagine 404, asparagine 440, asparagine 477, asparagine 518, asparagine 679, and asparagine 701 are each glycosylated (N-linked (GlcNAc...) asparagine).

It belongs to the glycosyl hydrolase 3 family.

It localises to the secreted. It catalyses the reaction Hydrolysis of (1-&gt;4)-beta-D-xylans, to remove successive D-xylose residues from the non-reducing termini.. It participates in glycan degradation; xylan degradation. Xylan 1,4-beta-xylosidase involved in the hydrolysis of xylan, a major structural heterogeneous polysaccharide found in plant biomass representing the second most abundant polysaccharide in the biosphere, after cellulose. In Aspergillus fumigatus (strain CBS 144.89 / FGSC A1163 / CEA10) (Neosartorya fumigata), this protein is Probable exo-1,4-beta-xylosidase xlnD (xlnD).